Here is a 166-residue protein sequence, read N- to C-terminus: Myosin regulatory light chain 2, ventricular/cardiac muscle isoform (166 aa).

A2 carries the post-translational modification N,N,N-trimethylalanine. S14 and S15 each carry phosphoserine; by MLCK. At S19 the chain carries Phosphoserine. EF-hand domains follow at residues 24-59 (TQIQEFKEAFTIMDQNRDGFIDKNDLRDTFAALGRV), 94-129 (DPEETILNAFKVFDPEGKGSLKADYVREMLTTQAER), and 130-165 (FSKEEIDQMFAAFPPDVTGNLDYKNLVHIITHGEEK). 4 residues coordinate Ca(2+): D37, N39, D41, and D48. The residue at position 52 (T52) is a Phosphothreonine.

Myosin is a hexamer of 2 heavy chains and 4 light chains. Interacts with MYOC. In terms of processing, N-terminus is methylated by METTL11A/NTM1. Phosphorylated by MYLK3 and MYLK2; promotes cardiac muscle contraction and function. Dephosphorylated by PPP1CB complexed to PPP1R12B. The phosphorylated form in adult is expressed as gradients across the heart from endocardium (low phosphorylation) to epicardium (high phosphorylation); regulates cardiac torsion and workload distribution. Abundantly expressed in both cardiac and slow skeletal muscle. In the adult heart, the phosphorylated form is highly expressed in epicardium and weakly in endocardium.

Its subcellular location is the cytoplasm. The protein localises to the myofibril. The protein resides in the sarcomere. It localises to the a band. Functionally, contractile protein that plays a role in heart development and function. Following phosphorylation, plays a role in cross-bridge cycling kinetics and cardiac muscle contraction by increasing myosin lever arm stiffness and promoting myosin head diffusion; as a consequence of the increase in maximum contraction force and calcium sensitivity of contraction force. These events altogether slow down myosin kinetics and prolong duty cycle resulting in accumulated myosins being cooperatively recruited to actin binding sites to sustain thin filament activation as a means to fine-tune myofilament calcium sensitivity to force. During cardiogenesis plays an early role in cardiac contractility by promoting cardiac myofibril assembly. This chain is Myosin regulatory light chain 2, ventricular/cardiac muscle isoform, found in Mus musculus (Mouse).